A 309-amino-acid chain; its full sequence is ADP-L-glycero-D-manno-heptose-6-epimerase (309 aa).

NADP(+) contacts are provided by residues leucine 10 to isoleucine 11, aspartate 31 to asparagine 32, lysine 38, lysine 53, glutamine 75 to serine 79, and asparagine 92. The Proton acceptor role is filled by tyrosine 139. NADP(+) is bound at residue lysine 143. Asparagine 168 is a substrate binding site. Positions 169 and 177 each coordinate NADP(+). Lysine 177 (proton acceptor) is an active-site residue. Substrate contacts are provided by residues serine 179, histidine 186, phenylalanine 200–serine 203, arginine 208, and tyrosine 271.

Belongs to the NAD(P)-dependent epimerase/dehydratase family. HldD subfamily. As to quaternary structure, homopentamer. NADP(+) is required as a cofactor.

It catalyses the reaction ADP-D-glycero-beta-D-manno-heptose = ADP-L-glycero-beta-D-manno-heptose. It functions in the pathway nucleotide-sugar biosynthesis; ADP-L-glycero-beta-D-manno-heptose biosynthesis; ADP-L-glycero-beta-D-manno-heptose from D-glycero-beta-D-manno-heptose 7-phosphate: step 4/4. Catalyzes the interconversion between ADP-D-glycero-beta-D-manno-heptose and ADP-L-glycero-beta-D-manno-heptose via an epimerization at carbon 6 of the heptose. In Histophilus somni (strain 2336) (Haemophilus somnus), this protein is ADP-L-glycero-D-manno-heptose-6-epimerase.